Here is a 124-residue protein sequence, read N- to C-terminus: Type-4 ice-structuring protein (124 aa).

A signal peptide spans 1 to 20; it reads MKFSLIAAVALLALAQGSFA. Position 21 is a pyrrolidone carboxylic acid (glutamine 21).

The protein belongs to the apolipoprotein A1/A4/E family.

It is found in the secreted. Antifreeze proteins lower the blood freezing point. The chain is Type-4 ice-structuring protein from Paralichthys olivaceus (Bastard halibut).